Reading from the N-terminus, the 507-residue chain is Cuticlin-4 (507 aa).

Residues 1-19 form the signal peptide; the sequence is MFHFTRILAAFLLPTLCFC. At 20-471 the chain is on the extracellular side; sequence GYSTAPSSTV…KTCFSTSRMY (452 aa). The ZP domain maps to 42–280; sequence VCETASISLL…YGCSNTQPQC (239 aa). Residues 292–350 form a disordered region; the sequence is KTTETAEPYPYDSHESGYPTRPANYPVASSRYPIPTTQAPASYPSSPAPPPPGADIDNG. Asn374 and Asn408 each carry an N-linked (GlcNAc...) asparagine glycan. Residues 472 to 492 form a helical membrane-spanning segment; it reads FTLILLCLLFATTVVVFIVIV. Residues 493–507 lie on the Cytoplasmic side of the membrane; sequence QKQRQILAQTAFFKP.

The protein localises to the cell membrane. In terms of biological role, plays a role in alae formation and subsequent cuticle attachment in adults. The sequence is that of Cuticlin-4 from Caenorhabditis elegans.